Here is a 507-residue protein sequence, read N- to C-terminus: MTIKFASLILAGLGLGSGALGSVTFRREESSWTNDSLTSVFAQQAKGLFLPRTVISFQGQEWFENVTERWDIYAPPTFKVSVSPSTEKDVESAVKLAAKFKIPFLATGGRHGYGTTLGKLKNGLSIDLSLLNQFSIDSKAATITVGPGVRFRDIFTPLYEAGFQVPTGTCSCVGMIGATLGGGIGRLNGLDGLMIDALESARVVTADGRTLTVSEKENKDLFWGMRGAGQNFGVVVSATYKLKPLYAAGVWTNVDLIFSPDKNATYFDVVTSMEVPPQLTIASVVTYNATLDEPQLIATLTWTGPRDEALAAMKPILDVGPRHSEVTEATYATLPRVATFGTTDAVCAPGQIYDIYGVGLRRLDSAAWRSTFSKMARFYAAEPAGRASSILYETWPVQATVAVPDDATAYPWRDASTYVLIQMRWDRPGSPLERAADRLGAELRSDLSATGGYQGAGPAVYVNYAHGDERLEDIYGARKLPRLAKLKKQYDPGNVFRFHHALPTKYP.

The first 21 residues, 1 to 21 (MTIKFASLILAGLGLGSGALG), serve as a signal peptide directing secretion. Residues asparagine 34 and asparagine 65 are each glycosylated (N-linked (GlcNAc...) asparagine). The FAD-binding PCMH-type domain maps to 73-245 (YAPPTFKVSV…VSATYKLKPL (173 aa)). 2 N-linked (GlcNAc...) asparagine glycosylation sites follow: asparagine 263 and asparagine 288.

It belongs to the oxygen-dependent FAD-linked oxidoreductase family. It depends on FAD as a cofactor.

The catalysed reaction is dihydropyriculol + A = pyriculol + AH2. It catalyses the reaction dihydropyriculariol + A = pyriculariol + AH2. It functions in the pathway polyketide biosynthesis. Functionally, FAD-linked oxidoreductase; part of the gene cluster that mediates the biosynthesis of pyriculol and pyriculariol, two heptaketides that induce lesion formation upon application on rice leaves but are dispensable for pathogenicity. The highly reducing polyketide synthase synthesizes the heptaketide backbone of pyriculol and pyriculariol. Pyriculol and pyriculariol contain several hydroxyl moieties and double bonds, so it can be assumed that several reduction steps occur during biosynthesis. These reactions could be executed by PKS19 itself or partly by the tailoring enzymes OXR1, OXR2, RED1, RED2 or RED3, identified within the cluster. The FAD-linked oxidoreductase OXR1 is the only tailoring enzyme for which the function has been determined yet, and is involved in the oxidation of dihydropyriculol and dihydropyriculariol into pyriculol and pyriculariol, respectively. This Pyricularia oryzae (strain 70-15 / ATCC MYA-4617 / FGSC 8958) (Rice blast fungus) protein is FAD-linked oxidoreductase OXR1.